A 237-amino-acid chain; its full sequence is tRNA1(Val) (adenine(37)-N6)-methyltransferase (237 aa).

This sequence belongs to the methyltransferase superfamily. tRNA (adenine-N(6)-)-methyltransferase family.

The protein resides in the cytoplasm. The catalysed reaction is adenosine(37) in tRNA1(Val) + S-adenosyl-L-methionine = N(6)-methyladenosine(37) in tRNA1(Val) + S-adenosyl-L-homocysteine + H(+). Its function is as follows. Specifically methylates the adenine in position 37 of tRNA(1)(Val) (anticodon cmo5UAC). The sequence is that of tRNA1(Val) (adenine(37)-N6)-methyltransferase from Parabacteroides distasonis (strain ATCC 8503 / DSM 20701 / CIP 104284 / JCM 5825 / NCTC 11152).